Reading from the N-terminus, the 617-residue chain is Bifunctional TH2 protein, mitochondrial (617 aa).

The transit peptide at 1-28 (MRFLFPTRLINNSSLGLLRSPHTTAPIR) directs the protein to the mitochondrion. A substrate-binding site is contributed by D107. Catalysis depends on C213, which acts as the Nucleophile. Residues Y217 and Y244 each contribute to the substrate site. E286 acts as the Proton donor in catalysis.

This sequence in the N-terminal section; belongs to the TenA family. The protein in the C-terminal section; belongs to the HAD-like hydrolase superfamily.

The protein resides in the mitochondrion. Its subcellular location is the cytoplasm. It catalyses the reaction thiamine phosphate + H2O = thiamine + phosphate. The enzyme catalyses 4-amino-5-aminomethyl-2-methylpyrimidine + H2O = 4-amino-5-hydroxymethyl-2-methylpyrimidine + NH4(+). May be involved in the salvage of thiamine breakdown products. This protein has a haloacid dehalogenase family domain fused to its TenA domain. Phosphatase with the highest activity against thiamine monophosphate (ThMP) and, with a lower activity, against thiamine diphosphate (ThDP), flavin mononucleotide, inorganic pyrophosphate, CTP and dATP. Has a thiamine salvage hydrolase activity, but only against 4-amino-5-aminomethyl-2-methylpyrimidine (amino-HMP) and not against N-formylamino-HMP, desthiothiamine, thiamine, ThMP, and ThDP. The chain is Bifunctional TH2 protein, mitochondrial from Arabidopsis thaliana (Mouse-ear cress).